The following is a 368-amino-acid chain: Zinc finger protein 24 (368 aa).

Lysine 22 participates in a covalent cross-link: Glycyl lysine isopeptide (Lys-Gly) (interchain with G-Cter in SUMO2). Residue lysine 27 forms a Glycyl lysine isopeptide (Lys-Gly) (interchain with G-Cter in SUMO1); alternate linkage. A Glycyl lysine isopeptide (Lys-Gly) (interchain with G-Cter in SUMO2); alternate cross-link involves residue lysine 27. Residues 52 to 134 form the SCAN box domain; sequence RQRFRQFGYQ…AVLEDLESEL (83 aa). Phosphoserine occurs at positions 132 and 142. Glycyl lysine isopeptide (Lys-Gly) (interchain with G-Cter in SUMO2) cross-links involve residues lysine 147, lysine 177, and lysine 236. A C2H2-type 1 zinc finger spans residues 251 to 273; it reads HICDECGKHFSQGSALILHQRIH. Positions 251–301 are necessary and sufficient for nuclear localization; sequence HICDECGKHFSQGSALILHQRIHSGEKPYGCVECGKAFSRSSILVQHQRVH. Serine 274 carries the phosphoserine modification. Residues lysine 277 and lysine 286 each participate in a glycyl lysine isopeptide (Lys-Gly) (interchain with G-Cter in SUMO2) cross-link. C2H2-type zinc fingers lie at residues 279–301, 307–329, and 335–357; these read YGCVECGKAFSRSSILVQHQRVH, YKCLECGKAFSQNSGLINHQRIH, and YECVQCGKSYSQSSNLFRHQRRH. The residue at position 292 (serine 292) is a Phosphoserine. The residue at position 335 (tyrosine 335) is a Phosphotyrosine. Glycyl lysine isopeptide (Lys-Gly) (interchain with G-Cter in SUMO2) cross-links involve residues lysine 361 and lysine 367.

It belongs to the krueppel C2H2-type zinc-finger protein family. Post-translationally, sumoylated. As to expression, widely expressed with highest levels in heart, brain, liver, skeletal muscle, kidney and testis and very low levels in spleen and lung.

The protein resides in the nucleus. Its function is as follows. Transcription factor required for myelination of differentiated oligodendrocytes. Required for the conversion of oligodendrocytes from the premyelinating to the myelinating state. In the developing central nervous system (CNS), involved in the maintenance in the progenitor stage by promoting the cell cycle. Specifically binds to the 5'-TCAT-3' DNA sequence. Has transcription repressor activity in vitro. This Mus musculus (Mouse) protein is Zinc finger protein 24.